Consider the following 463-residue polypeptide: Sialic acid-binding Ig-like lectin 9 (463 aa).

Residues 1-17 (MLLLLLPLLWGRERAEG) form the signal peptide. The Extracellular segment spans residues 18–348 (QTSKLLTMQS…SKATSGVTQG (331 aa)). The Ig-like V-type domain maps to 20–140 (SKLLTMQSSV…KHHRLSVNVT (121 aa)). 3 disulfides stabilise this stretch: Cys-36–Cys-170, Cys-41–Cys-102, and Cys-164–Cys-213. A glycan (N-linked (GlcNAc...) asparagine) is linked at Asn-101. Arg-120 is an N-acetylneuraminate binding site. Asn-138 and Asn-161 each carry an N-linked (GlcNAc...) asparagine glycan. One can recognise an Ig-like C2-type 1 domain in the interval 146-229 (PNILIPGTLE…ASVTTNKTVH (84 aa)). N-linked (GlcNAc...) asparagine glycans are attached at residues Asn-225, Asn-231, Asn-238, and Asn-256. Residues 236–336 (PQNLTMTVFQ…GSQQVYLNVS (101 aa)) form the Ig-like C2-type 2 domain. Residues Cys-272 and Cys-320 are joined by a disulfide bond. N-linked (GlcNAc...) asparagine glycosylation is present at Asn-334. The helical transmembrane segment at 349–369 (VVGGAGATALVFLSFCVIFVV) threads the bilayer. The Cytoplasmic portion of the chain corresponds to 370–463 (VRSCRKKSAR…TEYSEIKIHR (94 aa)). Residues 380–428 (PAAGVGDTGIEDANAVRGSASQGPLTEPWAEDSPPDQPPPASARSSVGE) form a disordered region. The ITIM motif motif lies at 431 to 436 (LQYASL). The interval 444-463 (WDSRGQEATDTEYSEIKIHR) is disordered. An SLAM-like motif motif is present at residues 454 to 459 (TEYSEI).

The protein belongs to the immunoglobulin superfamily. SIGLEC (sialic acid binding Ig-like lectin) family. Expressed by peripheral blood leukocytes (neutrophils and monocytes but not eosinophils). Found in liver, fetal liver, bone marrow, placenta, spleen and in lower levels in skeletal muscle, fetal brain, stomach, lung, thymus, prostate, brain, mammary, adrenal gland, colon, trachea, cerebellum, testis, small intestine and spinal cordon.

It is found in the membrane. Its function is as follows. Putative adhesion molecule that mediates sialic-acid dependent binding to cells. Preferentially binds to alpha-2,3- or alpha-2,6-linked sialic acid. The sialic acid recognition site may be masked by cis interactions with sialic acids on the same cell surface. The polypeptide is Sialic acid-binding Ig-like lectin 9 (SIGLEC9) (Homo sapiens (Human)).